The chain runs to 228 residues: Sec-independent protein translocase protein TatB (228 aa).

Residues 1 to 21 (MFDFGLGELVFVGIIALIVLG) form a helical membrane-spanning segment. Disordered regions lie at residues 138-162 (RSYA…AETD) and 195-228 (PVPH…VRKS). Residues 206–228 (AISRKRDLRPKSRAKPKLRVRKS) show a composition bias toward basic residues.

This sequence belongs to the TatB family. The Tat system comprises two distinct complexes: a TatABC complex, containing multiple copies of TatA, TatB and TatC subunits, and a separate TatA complex, containing only TatA subunits. Substrates initially bind to the TatABC complex, which probably triggers association of the separate TatA complex to form the active translocon.

It localises to the cell inner membrane. Its function is as follows. Part of the twin-arginine translocation (Tat) system that transports large folded proteins containing a characteristic twin-arginine motif in their signal peptide across membranes. Together with TatC, TatB is part of a receptor directly interacting with Tat signal peptides. TatB may form an oligomeric binding site that transiently accommodates folded Tat precursor proteins before their translocation. The polypeptide is Sec-independent protein translocase protein TatB (Neisseria meningitidis serogroup A / serotype 4A (strain DSM 15465 / Z2491)).